The chain runs to 380 residues: Glucose-1-phosphate adenylyltransferase (380 aa).

Alpha-D-glucose 1-phosphate-binding positions include Gly164, 179–180, and Ser190; that span reads EK.

Belongs to the bacterial/plant glucose-1-phosphate adenylyltransferase family. Homotetramer.

The catalysed reaction is alpha-D-glucose 1-phosphate + ATP + H(+) = ADP-alpha-D-glucose + diphosphate. It functions in the pathway glycan biosynthesis; glycogen biosynthesis. Functionally, involved in the biosynthesis of ADP-glucose, a building block required for the elongation reactions to produce glycogen. Catalyzes the reaction between ATP and alpha-D-glucose 1-phosphate (G1P) to produce pyrophosphate and ADP-Glc. This is Glucose-1-phosphate adenylyltransferase from Lacticaseibacillus casei (strain BL23) (Lactobacillus casei).